The primary structure comprises 856 residues: Facilitated trehalose transporter Tret1 (856 aa).

Disordered stretches follow at residues 1–29 and 62–202; these read MSGRDNRGAGGGGGGHQPLSNAMGKLKEK and DPFL…KATS. Over 1 to 389 the chain is Cytoplasmic; the sequence is MSGRDNRGAG…LEVYRPTTNP (389 aa). A compositionally biased stretch (polar residues) spans 69–80; sequence VSPQRHPQTVRT. Positions 133 to 142 are enriched in basic and acidic residues; sequence EIREHRDRQQ. Residues 170 to 180 are compositionally biased toward polar residues; it reads GNSNTNSNKAA. A phosphoserine mark is found at serine 247, serine 248, serine 249, serine 319, and serine 321. The tract at residues 326-345 is disordered; the sequence is LTSRQHFQQQRSISTDSRKS. Residues 329 to 340 show a composition bias toward polar residues; it reads RQHFQQQRSIST. Residues 390–410 form a helical membrane-spanning segment; sequence IFIWTQVIAALSVSLGSLVVG. Over 411–439 the chain is Extracellular; it reads FVSAYTSPALVSMSDPNITSFTVTKDAGS. A glycan (N-linked (GlcNAc...) asparagine) is linked at asparagine 427. A helical transmembrane segment spans residues 440–460; the sequence is WVGGIMPLAGLVGGVAGGPLI. Topologically, residues 461 to 472 are cytoplasmic; that stretch reads EYMGRRNTILAT. A helical transmembrane segment spans residues 473–493; the sequence is AVPFIVSSLLIACAVNVAMVL. Topologically, residues 494-496 are extracellular; the sequence is CGR. A helical membrane pass occupies residues 497–517; that stretch reads FLAGFCVGIASLSLPVYLGET. Over 518-527 the chain is Cytoplasmic; it reads VQPEVRGTLG. A helical transmembrane segment spans residues 528 to 548; sequence LLPTAFGNIGILVCFVAGSFM. Asparagine 549 carries an N-linked (GlcNAc...) asparagine glycan. The Extracellular segment spans residues 549–551; the sequence is NWS. A helical membrane pass occupies residues 552-572; that stretch reads MLAFLGAALPVPFLILMFLIP. The Cytoplasmic portion of the chain corresponds to 573–635; it reads ETPRWYVSRG…ELLKRNNLKP (63 aa). A helical membrane pass occupies residues 636-656; it reads LSISLGLMFFQQFSGINAVIF. Topologically, residues 657–672 are extracellular; the sequence is YTVQIFKDAGSTIDGN. A helical membrane pass occupies residues 673 to 693; sequence VCTIIVGVVNFVATFIGILLI. The Cytoplasmic portion of the chain corresponds to 694 to 699; that stretch reads DRAGRK. The chain crosses the membrane as a helical span at residues 700–720; it reads ILLYASDIAMVLTLFVLGGFF. At 721 to 739 the chain is on the extracellular side; sequence YCKAHGPDVSHLGWLPLTC. A helical membrane pass occupies residues 740-760; it reads FVVYILGFSVGFGPIPWLMMG. Topologically, residues 761 to 766 are cytoplasmic; it reads EILPAK. The chain crosses the membrane as a helical span at residues 767–787; sequence IRGAAASVATSFNWTCTFVVT. Residues 788–800 are Extracellular-facing; that stretch reads KTFQDLVGSLGAH. The chain crosses the membrane as a helical span at residues 801–821; it reads GAFWLFGAICFVGLFFVILYV. Residues 822-856 lie on the Cytoplasmic side of the membrane; the sequence is PETQGKTLEDIERKMMGRVRRMSSVANIKPLSFNM. Phosphoserine occurs at positions 844 and 845.

Belongs to the major facilitator superfamily. Sugar transporter (TC 2.A.1.1) family. Trehalose transporter subfamily.

Its subcellular location is the cell membrane. Its function is as follows. Low-capacity facilitative transporter for trehalose. Does not transport maltose, sucrose or lactose. Mediates the bidirectional transfer of trehalose. Responsible for the transport of trehalose synthesized in the fat body and the incorporation of trehalose into other tissues that require a carbon source, thereby regulating trehalose levels in the hemolymph. This is Facilitated trehalose transporter Tret1 from Drosophila yakuba (Fruit fly).